We begin with the raw amino-acid sequence, 348 residues long: Ion-translocating oxidoreductase complex subunit D (348 aa).

The next 3 membrane-spanning stretches (helical) occupy residues Val20–Phe39, Tyr67–Val87, and Ala124–Ala144. Thr187 carries the FMN phosphoryl threonine modification. 4 helical membrane-spanning segments follow: residues Trp221–Trp241, Pro244–Ala264, Phe266–Ile286, and Leu300–Pro320.

Belongs to the NqrB/RnfD family. In terms of assembly, the complex is composed of six subunits: RnfA, RnfB, RnfC, RnfD, RnfE and RnfG. FMN is required as a cofactor.

The protein localises to the cell inner membrane. In terms of biological role, part of a membrane-bound complex that couples electron transfer with translocation of ions across the membrane. This is Ion-translocating oxidoreductase complex subunit D from Tolumonas auensis (strain DSM 9187 / NBRC 110442 / TA 4).